Consider the following 609-residue polypeptide: MIQVLLVTICLAALPYQGSSIILESGNVNDYEIVYPRKVTALPKGAVQPKYEDAMQYELKVNGEPVVLYLEKNKQLFSKDYSETHYSPDGREITTYPLVEDHCYYHGRIENDADSTASISACNGLKGHFKLQGEMYLIEPLKLSNSEAHAVYKYENVEKEDEAPKMCGVTQNWKSYEPIKKASQLVVTAEHQKYNPFRFVELVLVVDKAMVTKNNDDLDKIKTRMYELANTVNEIYRYMYIHVALVGLEIWSNEDKITVKPEAGYTLNAFGEWRKTDLLTRKKHDNAQLLTAIDLDRVIGLAYVGSMCHPKRSTGIIQDYSPINLVVAVIMAHEMGHNLGIHHDSGYCSCGDYACIMRPEISPEPSTFFSNCSYFDCWDFIMNQNPECIVNEPLGTDIISPPVCGNELLEVGEECDCGTPENCQNECCDAATCKLKSGSQCGHGDCCEQCKFSKSGTECRASMSECDPAEHCTGQSSECPADVFHKNGQPCLDNYGYCYNGNCPIMYHQCYDLFGADVYEAEDSCFERNQKGNYYGYCRKENGNKIPCAPEDVKCGRLYCKDNSPGQNNPCKMFYSNEDEHKGMVLPGTKCADGKVCSNGHCVDVATAY.

Positions 1–20 are cleaved as a signal peptide; sequence MIQVLLVTICLAALPYQGSS. A propeptide spanning residues 21-189 is cleaved from the precursor; that stretch reads IILESGNVND…KKASQLVVTA (169 aa). One can recognise a Peptidase M12B domain in the interval 198–393; sequence RFVELVLVVD…QNPECIVNEP (196 aa). Ca(2+) is bound by residues E201 and D285. Cystine bridges form between C308/C388, C348/C372, and C350/C355. Residue H333 coordinates Zn(2+). Residue E334 is part of the active site. Positions 337 and 343 each coordinate Zn(2+). Residue N371 is glycosylated (N-linked (GlcNAc...) asparagine). Residues C388, N391, V403, N406, L408, E410, E413, and D416 each coordinate Ca(2+). A Disintegrin domain is found at 401–487; sequence PPVCGNELLE…ECPADVFHKN (87 aa). Intrachain disulfides connect C404–C433, C415–C428, C417–C423, C427–C450, C441–C447, C446–C472, C459–C479, C466–C498, C491–C503, C510–C560, C525–C571, C538–C548, C555–C597, and C591–C602. Residues 465–467 carry the D/ECD-tripeptide motif; that stretch reads ECD. Residues D467, P468, E470, D482, and V483 each coordinate Ca(2+).

This sequence belongs to the venom metalloproteinase (M12B) family. P-III subfamily. P-IIIa sub-subfamily. Monomer. Zn(2+) is required as a cofactor. As to expression, expressed by the venom gland.

It localises to the secreted. In terms of biological role, this protein is a zinc metalloprotease from snake venom that possesses hemorrhagic activity. This is Zinc metalloproteinase-disintegrin-like from Crotalus durissus durissus (Central American rattlesnake).